Consider the following 944-residue polypeptide: Leucine--tRNA ligase 2 (944 aa).

The short motif at P36–H46 is the 'HIGH' region element. The short motif at K623–S627 is the 'KMSKS' region element. An ATP-binding site is contributed by K626.

The protein belongs to the class-I aminoacyl-tRNA synthetase family.

It localises to the cytoplasm. The catalysed reaction is tRNA(Leu) + L-leucine + ATP = L-leucyl-tRNA(Leu) + AMP + diphosphate. This chain is Leucine--tRNA ligase 2, found in Saccharolobus solfataricus (strain ATCC 35092 / DSM 1617 / JCM 11322 / P2) (Sulfolobus solfataricus).